A 423-amino-acid chain; its full sequence is Exodeoxyribonuclease 7 large subunit (423 aa).

It belongs to the XseA family. As to quaternary structure, heterooligomer composed of large and small subunits.

Its subcellular location is the cytoplasm. The enzyme catalyses Exonucleolytic cleavage in either 5'- to 3'- or 3'- to 5'-direction to yield nucleoside 5'-phosphates.. Its function is as follows. Bidirectionally degrades single-stranded DNA into large acid-insoluble oligonucleotides, which are then degraded further into small acid-soluble oligonucleotides. The sequence is that of Exodeoxyribonuclease 7 large subunit from Natranaerobius thermophilus (strain ATCC BAA-1301 / DSM 18059 / JW/NM-WN-LF).